The chain runs to 438 residues: Innexin inx7 (438 aa).

Topologically, residues 1–23 are cytoplasmic; it reads MLNTFSSVRQYLKFDLTRVVIDN. A helical membrane pass occupies residues 24–44; the sequence is IVFKLHYRWTFVILLVATLLI. Over 45-58 the chain is Extracellular; sequence TSRQYIGEHIQCLS. The helical transmembrane segment at 59 to 79 threads the bilayer; sequence DGVVSPVINTFCFFTPTFTVV. The Cytoplasmic portion of the chain corresponds to 80 to 112; that stretch reads RDQNQTAYRPGSEPPGIGAFDPEKDTIKRHAYY. The chain crosses the membrane as a helical span at residues 113–133; sequence QWVPFVLFFQALCFYIPHALW. Residues 134–283 lie on the Extracellular side of the membrane; that stretch reads KSWEGGRIKA…VMALNIMNEK (150 aa). Residues 284 to 304 form a helical membrane-spanning segment; that stretch reads IYIILWFWYAFLLIVTVLGLL. The Cytoplasmic segment spans residues 305 to 438; the sequence is WRILTLCFYR…STSDMAKLPV (134 aa). Disordered regions lie at residues 381–402 and 415–438; these read NDVN…PELS and RRNG…KLPV. A compositionally biased stretch (low complexity) spans 418–431; sequence GSPSAGGAQGPSTS.

This sequence belongs to the pannexin family. Expressed around gut lobes in embryonic stages 15-17.

Its subcellular location is the cell membrane. The protein localises to the cell junction. The protein resides in the gap junction. Structural components of the gap junctions. The sequence is that of Innexin inx7 (Inx7) from Drosophila melanogaster (Fruit fly).